A 284-amino-acid polypeptide reads, in one-letter code: 4-hydroxybenzoate octaprenyltransferase (284 aa).

The next 8 membrane-spanning stretches (helical) occupy residues 14–34, 41–61, 93–113, 134–154, 166–186, 209–229, 233–253, and 262–282; these read VHQPVGFFLLLWPTLWALWIT, FIVLSLFIVGVMCMRSAGCVI, WVFFILILIALIVVCVFNNII, YIYLPQLVLGIIFSWSILIVY, WLLFLANTIWVVLYDTEYAMV, IVIGILQLLTVFILYIIGIVE, IIFYLFSIVGASILFIWQQVL, and CLWAFLSNSYVGMLIFVGIVL.

Belongs to the UbiA prenyltransferase family. Mg(2+) is required as a cofactor.

The protein localises to the cell inner membrane. The catalysed reaction is all-trans-octaprenyl diphosphate + 4-hydroxybenzoate = 4-hydroxy-3-(all-trans-octaprenyl)benzoate + diphosphate. Its pathway is cofactor biosynthesis; ubiquinone biosynthesis. Its function is as follows. Catalyzes the prenylation of para-hydroxybenzoate (PHB) with an all-trans polyprenyl group. Mediates the second step in the final reaction sequence of ubiquinone-8 (UQ-8) biosynthesis, which is the condensation of the polyisoprenoid side chain with PHB, generating the first membrane-bound Q intermediate 3-octaprenyl-4-hydroxybenzoate. The protein is 4-hydroxybenzoate octaprenyltransferase of Blochmanniella floridana.